Reading from the N-terminus, the 322-residue chain is UDP-N-acetylenolpyruvoylglucosamine reductase (322 aa).

The region spanning 36-202 (RAGGPAQVLF…TSVLFEGVPG (167 aa)) is the FAD-binding PCMH-type domain. R182 is an active-site residue. S231 (proton donor) is an active-site residue. Residue E301 is part of the active site.

This sequence belongs to the MurB family. Requires FAD as cofactor.

The protein localises to the cytoplasm. It carries out the reaction UDP-N-acetyl-alpha-D-muramate + NADP(+) = UDP-N-acetyl-3-O-(1-carboxyvinyl)-alpha-D-glucosamine + NADPH + H(+). It participates in cell wall biogenesis; peptidoglycan biosynthesis. Cell wall formation. This Brucella suis (strain ATCC 23445 / NCTC 10510) protein is UDP-N-acetylenolpyruvoylglucosamine reductase.